Reading from the N-terminus, the 89-residue chain is Small ribosomal subunit protein bS16c (89 aa).

The protein belongs to the bacterial ribosomal protein bS16 family.

It localises to the plastid. It is found in the chloroplast. The polypeptide is Small ribosomal subunit protein bS16c (Morus indica (Mulberry)).